The following is a 440-amino-acid chain: 3-phosphoshikimate 1-carboxyvinyltransferase (440 aa).

3 residues coordinate 3-phosphoshikimate: Lys-26, Ser-27, and Arg-31. Lys-26 provides a ligand contact to phosphoenolpyruvate. The phosphoenolpyruvate site is built by Gly-99 and Arg-127. Positions 172, 174, 320, and 347 each coordinate 3-phosphoshikimate. Gln-174 contributes to the phosphoenolpyruvate binding site. Asp-320 acts as the Proton acceptor in catalysis. Arg-351 and Arg-392 together coordinate phosphoenolpyruvate.

This sequence belongs to the EPSP synthase family. Monomer.

It localises to the cytoplasm. It catalyses the reaction 3-phosphoshikimate + phosphoenolpyruvate = 5-O-(1-carboxyvinyl)-3-phosphoshikimate + phosphate. It functions in the pathway metabolic intermediate biosynthesis; chorismate biosynthesis; chorismate from D-erythrose 4-phosphate and phosphoenolpyruvate: step 6/7. Its function is as follows. Catalyzes the transfer of the enolpyruvyl moiety of phosphoenolpyruvate (PEP) to the 5-hydroxyl of shikimate-3-phosphate (S3P) to produce enolpyruvyl shikimate-3-phosphate and inorganic phosphate. The polypeptide is 3-phosphoshikimate 1-carboxyvinyltransferase (Xanthomonas axonopodis pv. citri (strain 306)).